A 501-amino-acid chain; its full sequence is DNA nucleotidylexotransferase (501 aa).

The Nuclear localization signal motif lies at 11–17; the sequence is KKRKRPV. The BRCT domain maps to 24–121; the sequence is QVEVKFKEVT…RPVRVETRHS (98 aa). Positions 249–253 are involved in DNA binding; that stretch reads VGPKT. Residues 324 to 329 and 333 to 336 contribute to the a 2'-deoxyribonucleoside 5'-triphosphate site; these read GFRRGK and HDVD. Asp334, Asp336, and Asp426 together coordinate Mg(2+). 441-442 provides a ligand contact to a 2'-deoxyribonucleoside 5'-triphosphate; it reads GW.

It belongs to the DNA polymerase type-X family. Mg(2+) is required as a cofactor.

Its subcellular location is the nucleus. The catalysed reaction is DNA(n) + a 2'-deoxyribonucleoside 5'-triphosphate = DNA(n+1) + diphosphate. Functionally, template-independent DNA polymerase which catalyzes the random addition of deoxynucleoside 5'-triphosphate to the 3'-end of a DNA initiator. One of the in vivo functions of this enzyme is the addition of nucleotides at the junction (N region) of rearranged Ig heavy chain and T-cell receptor gene segments during the maturation of B- and T-cells. In Oncorhynchus mykiss (Rainbow trout), this protein is DNA nucleotidylexotransferase (dntt).